The chain runs to 409 residues: Probable aspartate/prephenate aminotransferase (409 aa).

3 residues coordinate L-aspartate: G39, W125, and N175. N6-(pyridoxal phosphate)lysine is present on K239. Residue R375 coordinates L-aspartate.

Belongs to the class-I pyridoxal-phosphate-dependent aminotransferase family. As to quaternary structure, homodimer. It depends on pyridoxal 5'-phosphate as a cofactor.

It is found in the cytoplasm. The catalysed reaction is L-aspartate + 2-oxoglutarate = oxaloacetate + L-glutamate. It catalyses the reaction L-arogenate + 2-oxoglutarate = prephenate + L-glutamate. Functionally, catalyzes the reversible conversion of aspartate and 2-oxoglutarate to glutamate and oxaloacetate. Can also transaminate prephenate in the presence of glutamate. In Rickettsia felis (strain ATCC VR-1525 / URRWXCal2) (Rickettsia azadi), this protein is Probable aspartate/prephenate aminotransferase (aatA).